Here is a 504-residue protein sequence, read N- to C-terminus: 26S proteasome non-ATPase regulatory subunit 3 (504 aa).

The 181-residue stretch at 254–434 folds into the PCI domain; sequence ARYFYYQGRI…GYLQSRENID (181 aa). Positions 485 to 504 are disordered; sequence KEEMERQAEESSDNEGDSDF. The span at 494-504 shows a compositional bias: acidic residues; it reads ESSDNEGDSDF.

The protein belongs to the proteasome subunit S3 family. In terms of assembly, the 26S proteasome is composed of a core protease, known as the 20S proteasome, capped at one or both ends by the 19S regulatory complex (RC). The RC is composed of at least 18 different subunits in two subcomplexes, the base and the lid, which form the portions proximal and distal to the 20S proteolytic core, respectively.

Its function is as follows. Acts as a regulatory subunit of the 26 proteasome which is involved in the ATP-dependent degradation of ubiquitinated proteins. The chain is 26S proteasome non-ATPase regulatory subunit 3 (psmD3) from Dictyostelium discoideum (Social amoeba).